The sequence spans 419 residues: UDP-N-acetylglucosamine 1-carboxyvinyltransferase (419 aa).

22–23 (KN) is a binding site for phosphoenolpyruvate. Arginine 93 lines the UDP-N-acetyl-alpha-D-glucosamine pocket. The Proton donor role is filled by cysteine 117. Residue cysteine 117 is modified to 2-(S-cysteinyl)pyruvic acid O-phosphothioketal. Residues aspartate 306 and isoleucine 328 each coordinate UDP-N-acetyl-alpha-D-glucosamine.

The protein belongs to the EPSP synthase family. MurA subfamily.

The protein resides in the cytoplasm. The enzyme catalyses phosphoenolpyruvate + UDP-N-acetyl-alpha-D-glucosamine = UDP-N-acetyl-3-O-(1-carboxyvinyl)-alpha-D-glucosamine + phosphate. It participates in cell wall biogenesis; peptidoglycan biosynthesis. Cell wall formation. Adds enolpyruvyl to UDP-N-acetylglucosamine. The polypeptide is UDP-N-acetylglucosamine 1-carboxyvinyltransferase (Ruthia magnifica subsp. Calyptogena magnifica).